We begin with the raw amino-acid sequence, 256 residues long: tRNA (guanine-N(1)-)-methyltransferase (256 aa).

Residues Gly119 and 139–144 (IGDYVV) contribute to the S-adenosyl-L-methionine site.

This sequence belongs to the RNA methyltransferase TrmD family. Homodimer.

It is found in the cytoplasm. It carries out the reaction guanosine(37) in tRNA + S-adenosyl-L-methionine = N(1)-methylguanosine(37) in tRNA + S-adenosyl-L-homocysteine + H(+). Its function is as follows. Specifically methylates guanosine-37 in various tRNAs. The sequence is that of tRNA (guanine-N(1)-)-methyltransferase from Nitrosospira multiformis (strain ATCC 25196 / NCIMB 11849 / C 71).